Reading from the N-terminus, the 189-residue chain is Interferon alpha-14 (189 aa).

An N-terminal signal peptide occupies residues 1-23; it reads MALPFALMMALVVLSCKSSCSLG. 2 disulfide bridges follow: cysteine 24–cysteine 122 and cysteine 52–cysteine 162. The N-linked (GlcNAc...) asparagine glycan is linked to asparagine 95.

This sequence belongs to the alpha/beta interferon family.

It localises to the secreted. Produced by macrophages, IFN-alpha have antiviral activities. Interferon stimulates the production of two enzymes: a protein kinase and an oligoadenylate synthetase. The polypeptide is Interferon alpha-14 (IFNA14) (Homo sapiens (Human)).